The following is a 366-amino-acid chain: MVPEMSERQEFQASDFAYLLENSSYDYGENETYFCCTSPPCPQDFSLNFDRTFLPVLYSLLFVLGLLGNGIVAVVLLSQRAALSSTDTFLLHLAVADALLVLTLPLWAVDAAIQWVFGSGLCKVAGALFNINFYAGALLLACISFDRYLSIVHATQLYRRGPPTRVALTCVAVWGLCLLFALPDFIFLSSHHDNRLNATHCQYNFPQEGHTALRILQLVAGFLLPLLVMAYCYARILAVLLVSRGQRRLRAMRLVVVVVVAFALCWTPYHLVVLVDTLMDLGALARNCGRESSVDIAKSVTSGMGYMHCCLNPLLYAFVGVKFRERMWVLLVRLGCPDQRCHQRQPSASRRESSWSETTEASYSGL.

The Extracellular portion of the chain corresponds to 1–55 (MVPEMSERQEFQASDFAYLLENSSYDYGENETYFCCTSPPCPQDFSLNFDRTFLP). An N-linked (GlcNAc...) asparagine glycan is attached at N22. A sulfotyrosine mark is found at Y25 and Y27. A glycan (N-linked (GlcNAc...) asparagine) is linked at N30. The helical transmembrane segment at 56–76 (VLYSLLFVLGLLGNGIVAVVL) threads the bilayer. Residues 77–88 (LSQRAALSSTDT) are Cytoplasmic-facing. The helical transmembrane segment at 89–109 (FLLHLAVADALLVLTLPLWAV) threads the bilayer. Topologically, residues 110–124 (DAAIQWVFGSGLCKV) are extracellular. C122 and C201 are joined by a disulfide. A helical membrane pass occupies residues 125–145 (AGALFNINFYAGALLLACISF). Topologically, residues 146-167 (DRYLSIVHATQLYRRGPPTRVA) are cytoplasmic. The chain crosses the membrane as a helical span at residues 168–188 (LTCVAVWGLCLLFALPDFIFL). The Extracellular portion of the chain corresponds to 189 to 221 (SSHHDNRLNATHCQYNFPQEGHTALRILQLVAG). An N-linked (GlcNAc...) asparagine glycan is attached at N197. A helical membrane pass occupies residues 222–242 (FLLPLLVMAYCYARILAVLLV). The Cytoplasmic segment spans residues 243-254 (SRGQRRLRAMRL). The chain crosses the membrane as a helical span at residues 255–275 (VVVVVVAFALCWTPYHLVVLV). Residues 276–299 (DTLMDLGALARNCGRESSVDIAKS) are Extracellular-facing. A helical membrane pass occupies residues 300–320 (VTSGMGYMHCCLNPLLYAFVG). At 321–366 (VKFRERMWVLLVRLGCPDQRCHQRQPSASRRESSWSETTEASYSGL) the chain is on the cytoplasmic side. The interval 341–366 (CHQRQPSASRRESSWSETTEASYSGL) is disordered. Residues 355–366 (WSETTEASYSGL) are compositionally biased toward low complexity.

Belongs to the G-protein coupled receptor 1 family. In terms of assembly, homomer. Forms heteromers with ACKR4. Interacts with PF4/CXCL4. Post-translationally, sulfation on Tyr-25 and Tyr-27 is essential for CXCL10 binding. N-glycosylated.

It localises to the cell membrane. Its function is as follows. Receptor for the C-X-C chemokine CXCL9, CXCL10 and CXCL11 and mediates the proliferation, survival and angiogenic activity of mesangial cells through a heterotrimeric G-protein signaling pathway. Probably promotes cell chemotaxis response. Binds to CCL21. Upon activation by PF4, induces activated T-lymphocytes migration mediated via downstream Ras/extracellular signal-regulated kinase (ERK) signaling. This Bos taurus (Bovine) protein is C-X-C chemokine receptor type 3 (CXCR3).